Here is a 351-residue protein sequence, read N- to C-terminus: MSKRGARTPGYWYDNTPIPLPARMLAPVYGAVTAVRRSLYRRGWLKRHGVPVPVVVIGNVTAGGTGKTPLTITLVSRLQQAGWTPGVASRGYGRDDAGTARWVDADTPVALGGDEPVLIAWKTGARVRVDTDRLAAARALVEAGCDIIVCDDGLQHYRLARDVEIEVVDGQRRYGNGRMLPAGPLREPAARARECDFRVVNLGQGSDAVIPVVGTPVADTDAGFGEWQMRLSIDSVQPMDGKRARPLASLAGQRVHAVAGIAHPERFFAMLRARGIGVVPHAFPDHHVYRAQDFSFGSRLPVLMTEKDAVKCRPFADEWLYSVPLKAELPAAFWVSLLDRLDKLASRHSDA.

61–68 (TAGGTGKT) serves as a coordination point for ATP.

It belongs to the LpxK family.

The catalysed reaction is a lipid A disaccharide + ATP = a lipid IVA + ADP + H(+). Its pathway is glycolipid biosynthesis; lipid IV(A) biosynthesis; lipid IV(A) from (3R)-3-hydroxytetradecanoyl-[acyl-carrier-protein] and UDP-N-acetyl-alpha-D-glucosamine: step 6/6. Its function is as follows. Transfers the gamma-phosphate of ATP to the 4'-position of a tetraacyldisaccharide 1-phosphate intermediate (termed DS-1-P) to form tetraacyldisaccharide 1,4'-bis-phosphate (lipid IVA). This is Tetraacyldisaccharide 4'-kinase from Xanthomonas campestris pv. campestris (strain 8004).